The primary structure comprises 290 residues: ADP-ribosylation factor-like protein 13A (290 aa).

GTP-binding positions include 28–35, 71–75, and 130–133; these read GLNNSGKT, DLNGD, and NKQD. Positions 204–226 are disordered; that stretch reads SKNNTGSGERCSSHSFSTRTGMS.

Belongs to the small GTPase superfamily. Arf family.

In Homo sapiens (Human), this protein is ADP-ribosylation factor-like protein 13A (ARL13A).